A 467-amino-acid polypeptide reads, in one-letter code: ATP-dependent protease ATPase subunit HslU (467 aa).

Residues V22 and 64 to 69 (GVGKTE) contribute to the ATP site. The interval 149–192 (QTNNPLESLFGGAIPNFGQNNEDEEEPPTEEIKTKRSEIKRQLE) is disordered. Basic and acidic residues predominate over residues 178 to 192 (EEIKTKRSEIKRQLE). The ATP site is built by D280, E345, and R417.

The protein belongs to the ClpX chaperone family. HslU subfamily. In terms of assembly, a double ring-shaped homohexamer of HslV is capped on each side by a ring-shaped HslU homohexamer. The assembly of the HslU/HslV complex is dependent on binding of ATP.

The protein localises to the cytoplasm. In terms of biological role, ATPase subunit of a proteasome-like degradation complex; this subunit has chaperone activity. The binding of ATP and its subsequent hydrolysis by HslU are essential for unfolding of protein substrates subsequently hydrolyzed by HslV. HslU recognizes the N-terminal part of its protein substrates and unfolds these before they are guided to HslV for hydrolysis. This is ATP-dependent protease ATPase subunit HslU from Staphylococcus aureus (strain bovine RF122 / ET3-1).